We begin with the raw amino-acid sequence, 147 residues long: Transthyretin (147 aa).

An N-terminal signal peptide occupies residues 1-20; sequence MASLRLFLLCLAGLIFASEA. Cys30 carries the post-translational modification Sulfocysteine. Lys35 lines the L-thyroxine pocket. Glu62 bears the 4-carboxyglutamate mark. Residue Ser72 is modified to Phosphoserine. Glu74 is a binding site for L-thyroxine. N-linked (GlcNAc...) asparagine glycosylation is present at Asn118. Ser137 serves as a coordination point for L-thyroxine.

This sequence belongs to the transthyretin family. As to quaternary structure, homotetramer. Dimer of dimers. In the homotetramer, subunits assemble around a central channel that can accommodate two ligand molecules. Interacts with RBP4. Sulfonation of the reactive cysteine Cys-30 enhances the stability of the native conformation of TTR, avoiding misassembly of the protein leading to amyloid formation. As to expression, detected in serum and cerebrospinal fluid (at protein level). Highly expressed in the choroid plexus. Detected at lower levels in the liver.

It localises to the secreted. Its function is as follows. Thyroid hormone-binding protein. Probably transports thyroxine from the bloodstream to the brain. This chain is Transthyretin (Ttr), found in Rattus norvegicus (Rat).